We begin with the raw amino-acid sequence, 1097 residues long: Error-prone DNA polymerase (1097 aa).

Residues 1039–1097 (PTGRGDEFAHGSPGGGDSRDRSPPKPRDIVVPLCRARHKGIDPEPETMPSAFPKPRDFR) are disordered. Positions 1055–1066 (DSRDRSPPKPRD) are enriched in basic and acidic residues.

It belongs to the DNA polymerase type-C family. DnaE2 subfamily.

The protein resides in the cytoplasm. The catalysed reaction is DNA(n) + a 2'-deoxyribonucleoside 5'-triphosphate = DNA(n+1) + diphosphate. Its function is as follows. DNA polymerase involved in damage-induced mutagenesis and translesion synthesis (TLS). It is not the major replicative DNA polymerase. This is Error-prone DNA polymerase from Allorhizobium ampelinum (strain ATCC BAA-846 / DSM 112012 / S4) (Agrobacterium vitis (strain S4)).